An 873-amino-acid polypeptide reads, in one-letter code: Leucine--tRNA ligase (873 aa).

The 'HIGH' region motif lies at 48–58 (PYPSGKLHMGH). Positions 636-640 (KMSKS) match the 'KMSKS' region motif. Residue Lys-639 coordinates ATP.

It belongs to the class-I aminoacyl-tRNA synthetase family.

The protein localises to the cytoplasm. It carries out the reaction tRNA(Leu) + L-leucine + ATP = L-leucyl-tRNA(Leu) + AMP + diphosphate. This chain is Leucine--tRNA ligase, found in Cupriavidus pinatubonensis (strain JMP 134 / LMG 1197) (Cupriavidus necator (strain JMP 134)).